The sequence spans 84 residues: Putative membrane protein insertion efficiency factor (84 aa).

This sequence belongs to the UPF0161 family.

The protein localises to the cell inner membrane. In terms of biological role, could be involved in insertion of integral membrane proteins into the membrane. This is Putative membrane protein insertion efficiency factor from Acidiphilium cryptum (strain JF-5).